A 154-amino-acid polypeptide reads, in one-letter code: Cytochrome c-type biogenesis protein CcmE (154 aa).

The Cytoplasmic segment spans residues 1-8 (MTPQRKRR). Residues 9-29 (LVMLAALAGGVGVAVALALAA) traverse the membrane as a helical; Signal-anchor for type II membrane protein segment. Residues 30–154 (LQQNINLFYS…GGTPAAEPQP (125 aa)) are Periplasmic-facing. Positions 124 and 128 each coordinate heme. The disordered stretch occupies residues 130–154 (PPEAAHALKQGAATSGGTPAAEPQP).

This sequence belongs to the CcmE/CycJ family.

It is found in the cell inner membrane. Heme chaperone required for the biogenesis of c-type cytochromes. Transiently binds heme delivered by CcmC and transfers the heme to apo-cytochromes in a process facilitated by CcmF and CcmH. This is Cytochrome c-type biogenesis protein CcmE from Bordetella petrii (strain ATCC BAA-461 / DSM 12804 / CCUG 43448).